Here is a 524-residue protein sequence, read N- to C-terminus: Zinc finger CCCH domain-containing protein 37 (524 aa).

The segment at 19 to 39 is disordered; sequence ASTVSPAPPPPQQPLPPKTGL. Residues 24–35 show a composition bias toward pro residues; it reads PAPPPPQQPLPP. C3H1-type zinc fingers lie at residues 174 to 202, 225 to 253, and 268 to 296; these read RAGE…HPIW, RPGE…HPRE, and RPSE…HPKD. Positions 300-319 are disordered; the sequence is PSSSQDIGSSVGLTSEPDAT. 3 consecutive C3H1-type zinc fingers follow at residues 340-368, 420-448, and 473-501; these read RSGE…HPER, RPGQ…HPAD, and REGA…HPPP. Residues 505-524 are disordered; the sequence is MAKTTSEADAAGATNTDTTQ. Residues 512 to 524 show a composition bias toward low complexity; that stretch reads ADAAGATNTDTTQ.

Interacts with HEN4. Interacts with FLK and PEP. Highly expressed in inflorescences, at intermediate levels in leaves and stems and at lower levels in roots.

The protein resides in the nucleus speckle. Its function is as follows. Involved in flower development. Functions in floral reproductive organ identity by binding AGAMOUS (AG) pre-mRNA and promoting its processing. Functions in association with HUA2 and HEN4. The protein is Zinc finger CCCH domain-containing protein 37 (HUA1) of Arabidopsis thaliana (Mouse-ear cress).